The following is a 235-amino-acid chain: Aspartate/glutamate leucyltransferase (235 aa).

This sequence belongs to the R-transferase family. Bpt subfamily.

It is found in the cytoplasm. It carries out the reaction N-terminal L-glutamyl-[protein] + L-leucyl-tRNA(Leu) = N-terminal L-leucyl-L-glutamyl-[protein] + tRNA(Leu) + H(+). The enzyme catalyses N-terminal L-aspartyl-[protein] + L-leucyl-tRNA(Leu) = N-terminal L-leucyl-L-aspartyl-[protein] + tRNA(Leu) + H(+). Functionally, functions in the N-end rule pathway of protein degradation where it conjugates Leu from its aminoacyl-tRNA to the N-termini of proteins containing an N-terminal aspartate or glutamate. In Pseudomonas syringae pv. tomato (strain ATCC BAA-871 / DC3000), this protein is Aspartate/glutamate leucyltransferase.